Consider the following 511-residue polypeptide: Glucans biosynthesis protein G (511 aa).

Residues 1 to 22 (MMKMRWLSAAVMLTLYTSSSWA) form the signal peptide.

Belongs to the OpgD/OpgG family.

It is found in the periplasm. It participates in glycan metabolism; osmoregulated periplasmic glucan (OPG) biosynthesis. Functionally, involved in the biosynthesis of osmoregulated periplasmic glucans (OPGs). The protein is Glucans biosynthesis protein G (mdoG) of Shigella flexneri.